We begin with the raw amino-acid sequence, 130 residues long: Protein UL145 (130 aa).

In terms of assembly, interacts with host DDB1; this interaction promotes STAT2 degradation.

Its function is as follows. Plays a role in the inhibition of host innate immunity by exploiting host DDB1-cullin RING ubiquitin ligases (CRLs). Mechanistically, recruits host DDB1 via a DCAF-like interaction motif to antagonize IFN signaling by STAT2 degradation. This Homo sapiens (Human) protein is Protein UL145 (UL145).